A 199-amino-acid polypeptide reads, in one-letter code: 3-hexulose-6-phosphate isomerase (199 aa).

One can recognise an SIS domain in the interval 44–186 (LARQIVQPGR…FQSLWDHTEV (143 aa)). Residues Ser62 and 101–106 (SGSGTT) contribute to the substrate site. Glu166 acts as the Proton acceptor in catalysis.

This sequence belongs to the SIS family. PHI subfamily.

It carries out the reaction D-arabino-hex-3-ulose 6-phosphate = beta-D-fructose 6-phosphate. It functions in the pathway one-carbon metabolism; formaldehyde assimilation via RuMP pathway; D-fructose 6-phosphate from D-ribulose 5-phosphate and formaldehyde: step 2/2. In terms of biological role, catalyzes the isomerization between 3-hexulose 6-phosphate and fructose 6-phosphate. This chain is 3-hexulose-6-phosphate isomerase (rmpB), found in Mycobacterium gastri.